The sequence spans 414 residues: Serine hydroxymethyltransferase (414 aa).

Residues Leu117 and 121–123 (GHL) contribute to the (6S)-5,6,7,8-tetrahydrofolate site. At Lys226 the chain carries N6-(pyridoxal phosphate)lysine.

Belongs to the SHMT family. As to quaternary structure, homodimer. Requires pyridoxal 5'-phosphate as cofactor.

The protein resides in the cytoplasm. It catalyses the reaction (6R)-5,10-methylene-5,6,7,8-tetrahydrofolate + glycine + H2O = (6S)-5,6,7,8-tetrahydrofolate + L-serine. Its pathway is one-carbon metabolism; tetrahydrofolate interconversion. It participates in amino-acid biosynthesis; glycine biosynthesis; glycine from L-serine: step 1/1. In terms of biological role, catalyzes the reversible interconversion of serine and glycine with tetrahydrofolate (THF) serving as the one-carbon carrier. This reaction serves as the major source of one-carbon groups required for the biosynthesis of purines, thymidylate, methionine, and other important biomolecules. Also exhibits THF-independent aldolase activity toward beta-hydroxyamino acids, producing glycine and aldehydes, via a retro-aldol mechanism. This chain is Serine hydroxymethyltransferase, found in Dictyoglomus turgidum (strain DSM 6724 / Z-1310).